Here is a 208-residue protein sequence, read N- to C-terminus: Uridine kinase (208 aa).

11 to 18 contacts ATP; that stretch reads GGTGSGKS.

The protein belongs to the uridine kinase family.

It localises to the cytoplasm. It catalyses the reaction uridine + ATP = UMP + ADP + H(+). It carries out the reaction cytidine + ATP = CMP + ADP + H(+). The protein operates within pyrimidine metabolism; CTP biosynthesis via salvage pathway; CTP from cytidine: step 1/3. It participates in pyrimidine metabolism; UMP biosynthesis via salvage pathway; UMP from uridine: step 1/1. The polypeptide is Uridine kinase (Clostridium perfringens (strain ATCC 13124 / DSM 756 / JCM 1290 / NCIMB 6125 / NCTC 8237 / Type A)).